The chain runs to 343 residues: Mas-related G-protein coupled receptor member F (343 aa).

Residues 1-44 (MAGNCSWEAHPGNRNKMCPGLSEAPELYSRGFLTIEQIAMLPPP) are Extracellular-facing. N-linked (GlcNAc...) asparagine glycosylation is present at asparagine 4. A helical transmembrane segment spans residues 45 to 66 (AVMNYIFLLLCLCGLVGNGLVL). Residues 67-82 (WFFGFSIKRNPFSIYF) lie on the Cytoplasmic side of the membrane. Residues 83–104 (LHLASADVGYLFSKAVFSILNT) form a helical membrane-spanning segment. Topologically, residues 105–123 (GGFLGTFADYIRSVCRVLG) are extracellular. A helical membrane pass occupies residues 124-144 (LCMFLTGVSLLPAVSAERCAS). The Cytoplasmic portion of the chain corresponds to 145–160 (VIFPAWYWRRRPKRLS). A helical transmembrane segment spans residues 161 to 181 (AVVCALLWVLSLLVTCLHNYF). The Extracellular segment spans residues 182–198 (CVFLGRGAPGAACRHMD). Residues 199 to 220 (IFLGILLFLLCCPLMVLPCLAL) form a helical membrane-spanning segment. The Cytoplasmic portion of the chain corresponds to 221–241 (ILHVECRARRRQRSAKLNHVI). A helical membrane pass occupies residues 242-263 (LAMVSVFLVSSIYLGIDWFLFW). Topologically, residues 264–273 (VFQIPAPFPE) are extracellular. The chain crosses the membrane as a helical span at residues 274-294 (YVTDLCICINSSAKPIVYFLA). The Cytoplasmic segment spans residues 295–343 (GRDKSQRLWEPLRVVFQRALRDGAELGEAGGSTPNTVTMEMQCPPGNAS). Residues 320 to 343 (LGEAGGSTPNTVTMEMQCPPGNAS) are disordered.

Belongs to the G-protein coupled receptor 1 family. Mas subfamily.

It localises to the cell membrane. Its function is as follows. Orphan receptor. May bind to a neuropeptide and may regulate nociceptor function and/or development, including the sensation or modulation of pain. The sequence is that of Mas-related G-protein coupled receptor member F (MRGPRF) from Homo sapiens (Human).